Here is a 94-residue protein sequence, read N- to C-terminus: uncharacterized protein (94 aa).

The chain crosses the membrane as a helical span at residues 13–33 (IVICLTTIISVTIFYILVSFF).

It is found in the membrane. This is an uncharacterized protein from Dictyostelium discoideum (Social amoeba).